The sequence spans 65 residues: Conotoxin Lt5.1 (65 aa).

Residues 1–19 form the signal peptide; the sequence is MRCLPVFIILLLLIPSAPS. A propeptide spanning residues 20–48 is cleaved from the precursor; sequence VDAQRKTKDDVPLASFHDNAKRTLKRLWN.

The protein belongs to the conotoxin T superfamily. Post-translationally, contains 2 disulfide bonds that can be either 'C1-C3, C2-C4' or 'C1-C4, C2-C3', since these disulfide connectivities have been observed for conotoxins with cysteine framework V (for examples, see AC P0DQQ7 and AC P81755). In terms of tissue distribution, expressed by the venom duct.

It localises to the secreted. In Conus litteratus (Lettered cone), this protein is Conotoxin Lt5.1.